Reading from the N-terminus, the 162-residue chain is Caveolin-2 (162 aa).

At 1–86 (MGLETEKADV…FEISKYVMYK (86 aa)) the chain is on the cytoplasmic side. Position 19 is a phosphotyrosine; by SRC (Tyr-19). Phosphoserine is present on residues Ser-20 and Ser-23. Phosphotyrosine; by SRC is present on Tyr-27. At Ser-36 the chain carries Phosphoserine. The segment at residues 87–107 (FLTVFLAIPLAFLAGILFATL) is an intramembrane region (helical). Residues 108–162 (SCLHIWIIMPFVKTCLMVLPSVQTIWKSVTDAIIAPLCTSIGRSFSSVSLQLSQD) are Cytoplasmic-facing.

It belongs to the caveolin family. As to quaternary structure, monomer or homodimer. Interacts with CAV1; the interaction forms a stable heterooligomeric complex that is required for targeting to lipid rafts and for caveolae formation. Tyrosine phosphorylated forms do not form heterooligomers with the Tyr-19-phosphorylated form existing as a monomer or dimer, and the Tyr-27-form as a monomer only. Interacts (tyrosine phosphorylated form) with the SH2 domain-containing proteins, RASA1, NCK1 and SRC. Interacts (tyrosine phosphorylated form) with INSR, the interaction (Tyr-27-phosphorylated form) is increased on insulin stimulation. Interacts (Tyr-19 phosphorylated form) with MAPK1 (phosphorylated form); the interaction, promoted by insulin, leads to nuclear location and MAPK1 activation. Interacts with STAT3; the interaction is increased on insulin-induced tyrosine phosphorylation leading to STAT activation. In terms of processing, phosphorylated on serine and tyrosine residues. CAV1 promotes phosphorylation on Ser-23 which then targets the complex to the plasma membrane, lipid rafts and caveolae. Phosphorylation on Ser-36 appears to modulate mitosis in endothelial cells. Phosphorylation on both Tyr-19 and Tyr-27 is required for insulin-induced 'Ser-727' phosphorylation of STAT3 and its activation. Phosphorylation on Tyr-19 is required for insulin-induced phosphorylation of MAPK1 and DNA binding of STAT3. Tyrosine phosphorylation is induced by both EGF and insulin (By. similarity).

It localises to the nucleus. It is found in the cytoplasm. The protein localises to the golgi apparatus membrane. Its subcellular location is the cell membrane. The protein resides in the membrane. It localises to the caveola. Its function is as follows. May act as a scaffolding protein within caveolar membranes. Interacts directly with G-protein alpha subunits and can functionally regulate their activity. Acts as an accessory protein in conjunction with CAV1 in targeting to lipid rafts and driving caveolae formation. The Ser-36 phosphorylated form has a role in modulating mitosis in endothelial cells. Positive regulator of cellular mitogenesis of the MAPK signaling pathway. Required for the insulin-stimulated nuclear translocation and activation of MAPK1 and STAT3, and the subsequent regulation of cell cycle progression. The chain is Caveolin-2 (CAV2) from Callithrix jacchus (White-tufted-ear marmoset).